A 1475-amino-acid chain; its full sequence is Mediator of RNA polymerase II transcription subunit 1.1 (1475 aa).

Disordered stretches follow at residues 579-600 (STIG…LTSM), 645-894 (GLAS…KMRE), and 908-1475 (PDVE…IDDE). Low complexity predominate over residues 655 to 666 (PVAAAAAAPGGP). The span at 755 to 766 (QRSSSEQHNPNP) shows a compositional bias: polar residues. Low complexity predominate over residues 767–800 (HQMSQYQMQQYQQNQQFRMHQMQQQQQQQFQMQS). Positions 810 to 819 (TDEDSDEECD) are enriched in acidic residues. The segment covering 829–838 (STSSRMSSVP) has biased composition (low complexity). Residues 869 to 880 (TPSPLSAPPKPF) are compositionally biased toward pro residues. Low complexity predominate over residues 915-929 (QQLSSSSSSSQAEAS). The span at 941-952 (PPKPSSSSAPPP) shows a compositional bias: pro residues. 2 stretches are compositionally biased toward low complexity: residues 969-989 (QQEQ…SELA) and 1037-1049 (QKPT…STSS). Basic and acidic residues-rich tracts occupy residues 1052–1070 (PPKK…EKLI), 1080–1148 (VVDD…EKEP), and 1155–1180 (EKKD…KEYS). Residues 1098–1135 (DRDRDEDREKVRDKEDKAQREKDKKEKERERRRQRDRD) are a coiled coil. Residues 1181–1193 (KASTTSLIPTLSL) show a composition bias toward polar residues. The segment covering 1199 to 1215 (PKKDTVEEEKKDVKEEA) has biased composition (basic and acidic residues). Positions 1242–1252 (APVAPAVQQQQ) are enriched in low complexity. A compositionally biased stretch (pro residues) spans 1281-1291 (PLQPPPPPQMT). The segment covering 1308–1317 (PGSSRPSGNR) has biased composition (polar residues). Composition is skewed to pro residues over residues 1320 to 1334 (PLPP…PPPD) and 1425 to 1440 (PPAP…PKDP).

Belongs to the Mediator complex subunit 1 family. In terms of assembly, component of the Mediator complex.

It is found in the nucleus. Its function is as follows. Component of the Mediator complex, a coactivator involved in the regulated transcription of nearly all RNA polymerase II-dependent genes. Mediator functions as a bridge to convey information from gene-specific regulatory proteins to the basal RNA polymerase II transcription machinery. Mediator is recruited to promoters by direct interactions with regulatory proteins and serves as a scaffold for the assembly of a functional preinitiation complex with RNA polymerase II and the general transcription factors. This is Mediator of RNA polymerase II transcription subunit 1.1 (sop-3) from Caenorhabditis elegans.